A 355-amino-acid polypeptide reads, in one-letter code: MELLKGSGLNQTESGGSSSTESSSLSGGLRFGQKIYFEDGSGSGSGSSKNRVHNTGRKSLTARCQVEGCRMDLTNAKSYYSRHKVCCIHSKSSKVIVSGLPQRFCQQCSRFHLLSEFDLEKRSCRRRLACHNERRRKPQATTSLLSSRYARTAPSLYGNANSAMIRSVLGDPTAWATARSAMRWSGPERESHQVMNVFSSHGSSSFTTTCPEMMMNNNGTDSSCALSLLSNTNPNQQLQQHQLQTPTNVWRPSSGFNPVIADRVTMAQPPPVSIHNQYLNNQTWEFTTGEKSNLQYMSPVLGPSQISQPADFQISNGSTMGGFELSHHQQVLRQYMEPENTRAYDSSPQHFNWSL.

Residues 1–27 are disordered; that stretch reads MELLKGSGLNQTESGGSSSTESSSLSG. The span at 12 to 27 shows a compositional bias: low complexity; that stretch reads TESGGSSSTESSSLSG. Residues 61-138 form an SBP-type zinc finger; the sequence is TARCQVEGCR…ACHNERRRKP (78 aa). 8 residues coordinate Zn(2+): C64, C69, C86, H89, C105, C108, H112, and C124. Positions 121–137 match the Bipartite nuclear localization signal motif; the sequence is KRSCRRRLACHNERRRK.

It localises to the nucleus. Its function is as follows. Probable transcription factor required for the flowering response to vernalization in the shoot apical meristem (SAM). Defines the competence of shoot meristems to flower in response to vernalization in perennials. The sequence is that of Squamosa promoter-binding protein-like 15 from Arabis alpina (Alpine rock-cress).